A 178-amino-acid polypeptide reads, in one-letter code: Translation initiation factor IF-3 (178 aa).

The tract at residues 1–20 (MRRPFKAAAPTKDGPRSNRD) is disordered.

It belongs to the IF-3 family. In terms of assembly, monomer.

It localises to the cytoplasm. IF-3 binds to the 30S ribosomal subunit and shifts the equilibrium between 70S ribosomes and their 50S and 30S subunits in favor of the free subunits, thus enhancing the availability of 30S subunits on which protein synthesis initiation begins. In Mesorhizobium japonicum (strain LMG 29417 / CECT 9101 / MAFF 303099) (Mesorhizobium loti (strain MAFF 303099)), this protein is Translation initiation factor IF-3.